We begin with the raw amino-acid sequence, 126 residues long: Holo-[acyl-carrier-protein] synthase (126 aa).

The Mg(2+) site is built by Asp-9 and Glu-58.

The protein belongs to the P-Pant transferase superfamily. AcpS family. Requires Mg(2+) as cofactor.

It is found in the cytoplasm. It carries out the reaction apo-[ACP] + CoA = holo-[ACP] + adenosine 3',5'-bisphosphate + H(+). Functionally, transfers the 4'-phosphopantetheine moiety from coenzyme A to a Ser of acyl-carrier-protein. The polypeptide is Holo-[acyl-carrier-protein] synthase (Photobacterium profundum (strain SS9)).